We begin with the raw amino-acid sequence, 608 residues long: MFDIKKELQKVPHKPGVYIMHDKNDEIIYVGKAIDLRRRVGQYFDSSKKLAKVAAMVSHVEYFEYIIVNNECEALVLESNLIKKNSPKYNIVLRDDKQYPYIKITNEKFPRVLKTRRVLKDKAKYFGPFPNAYAVNDIIDLIHETYKIRTCNLNFDKGQKLKRPCLNYYINRCDGMCVYDVNEEDYNKELLEVENFLNGREDELTKKLTDKMMAASKNLNFELAAKLRDSITNIQVILEKQNITNTKGLDLDMISMAREAETVCVQVFFMRNGKIIERQHFIIDNKYEESNEHIVGEFFKQFYIDLTYVPKQILTDIEIEDRDLIEEMLTEKKGSKVEIKIPKRGNKTDLLEMVRVNAKEGLDKYISRHLKRERNRENAILDLQDITGVKPIDRIECYDISNTSGVDSVGSMIVFKNGAKSSKDYRKFKIKTVEGADDYASHREVLTRRFRRLLDSDKKDNSFDEMPSIILMDGGKGQVNIAKEVLNEFNLDIPILGLVKDDKHRTRGIIYENEEIRLKVNTPLYRLLFAIQEETHRFAINYHRKLHEKNFKKSELDNIALIGEKRKKALMKHFKTLDRIKKASVEELCEVDGMNEKAAENIVNYFKQ.

One can recognise a GIY-YIG domain in the interval 13-91 (HKPGVYIMHD…IKKNSPKYNI (79 aa)). The UVR domain maps to 202-237 (DELTKKLTDKMMAASKNLNFELAAKLRDSITNIQVI).

This sequence belongs to the UvrC family. Interacts with UvrB in an incision complex.

It localises to the cytoplasm. The UvrABC repair system catalyzes the recognition and processing of DNA lesions. UvrC both incises the 5' and 3' sides of the lesion. The N-terminal half is responsible for the 3' incision and the C-terminal half is responsible for the 5' incision. This chain is UvrABC system protein C, found in Finegoldia magna (strain ATCC 29328 / DSM 20472 / WAL 2508) (Peptostreptococcus magnus).